A 198-amino-acid polypeptide reads, in one-letter code: 7-methyl-GTP pyrophosphatase (198 aa).

The Proton acceptor role is filled by Asp75.

It belongs to the Maf family. YceF subfamily. A divalent metal cation is required as a cofactor.

It localises to the cytoplasm. It catalyses the reaction N(7)-methyl-GTP + H2O = N(7)-methyl-GMP + diphosphate + H(+). Functionally, nucleoside triphosphate pyrophosphatase that hydrolyzes 7-methyl-GTP (m(7)GTP). May have a dual role in cell division arrest and in preventing the incorporation of modified nucleotides into cellular nucleic acids. The sequence is that of 7-methyl-GTP pyrophosphatase from Bartonella quintana (strain Toulouse) (Rochalimaea quintana).